Here is a 101-residue protein sequence, read N- to C-terminus: MKLAILTVLLLGAAVLCLGSKDADHSNSVGESHSSEAFISRQESASFARLKRSYGNNVGQGAAVGSPLESQREVCELNPDCDELADHIGFQEAYRRFYGPV.

A signal peptide spans 1 to 19 (MKLAILTVLLLGAAVLCLG). Positions 20–52 (SKDADHSNSVGESHSSEAFISRQESASFARLKR) are excised as a propeptide. One can recognise a Gla domain in the interval 53 to 99 (SYGNNVGQGAAVGSPLESQREVCELNPDCDELADHIGFQEAYRRFYG). Ca(2+)-binding residues include glutamate 69, glutamate 73, glutamate 76, and aspartate 82. Residues glutamate 69, glutamate 73, and glutamate 76 each carry the 4-carboxyglutamate modification. Cysteine 75 and cysteine 81 are joined by a disulfide.

It belongs to the osteocalcin/matrix Gla protein family. Post-translationally, gamma-carboxyglutamate residues are formed by vitamin K dependent carboxylation by GGCX. These residues are essential for the binding of calcium.

It is found in the secreted. The carboxylated form is one of the main organic components of the bone matrix, which constitutes 1-2% of the total bone protein. The carboxylated form binds strongly to apatite and calcium. In Xenopus laevis (African clawed frog), this protein is Osteocalcin (bglap).